A 573-amino-acid polypeptide reads, in one-letter code: Delta 8-(E)-sphingolipid desaturase (573 aa).

One can recognise a Cytochrome b5 heme-binding domain in the interval 2–77 (SRVLSRRDIA…FKIWKIGRID (76 aa)). Histidine 37 and histidine 60 together coordinate heme. Residues 228 to 248 (LFGISFYLLSLKWFAISAICL) form a helical membrane-spanning segment. The short motif at 260-264 (HDAGH) is the Histidine box-1 element. A helical transmembrane segment spans residues 273–293 (VDNIIGMTVASWIGGLSLGWW). Residues 297–301 (HDVHH) carry the Histidine box-2 motif. Transmembrane regions (helical) follow at residues 353–372 (YLYY…LSWM), 393–413 (LAEL…KQMP), and 422–442 (VMIS…SHFA). A Histidine box-3 motif is present at residues 481–485 (QVIHH).

Belongs to the fatty acid desaturase type 1 family.

It is found in the membrane. The catalysed reaction is an N-acylsphing-4-enine + 2 Fe(II)-[cytochrome b5] + O2 + 2 H(+) = a (4E,8E)-4-sphinga-4,8-dienine ceramide + 2 Fe(III)-[cytochrome b5] + 2 H2O. It functions in the pathway lipid metabolism; sphingolipid metabolism. Its function is as follows. Delta(8)-fatty-acid desaturase which introduces a double bond at the 8-position in the long-chain base (LCB) of ceramides. Required for the formation of the di-unsaturated sphingoid base (E,E)-sphinga-4,8-dienine during glucosylceramide (GluCer) biosynthesis. The polypeptide is Delta 8-(E)-sphingolipid desaturase (Kluyveromyces lactis (Yeast)).